Reading from the N-terminus, the 134-residue chain is ATP synthase epsilon chain (134 aa).

The protein belongs to the ATPase epsilon chain family. F-type ATPases have 2 components, CF(1) - the catalytic core - and CF(0) - the membrane proton channel. CF(1) has five subunits: alpha(3), beta(3), gamma(1), delta(1), epsilon(1). CF(0) has three main subunits: a, b and c.

Its subcellular location is the cell inner membrane. Its function is as follows. Produces ATP from ADP in the presence of a proton gradient across the membrane. This chain is ATP synthase epsilon chain, found in Solibacter usitatus (strain Ellin6076).